The chain runs to 133 residues: Small ribosomal subunit protein uS11 (133 aa).

The disordered stretch occupies residues 1-23 (MPPKTRGAVRKPRKKDKKNIALG). The segment covering 7-17 (GAVRKPRKKDK) has biased composition (basic residues).

The protein belongs to the universal ribosomal protein uS11 family. Part of the 30S ribosomal subunit. Interacts with proteins S7 and S18. Binds to IF-3.

Located on the platform of the 30S subunit, it bridges several disparate RNA helices of the 16S rRNA. Forms part of the Shine-Dalgarno cleft in the 70S ribosome. This is Small ribosomal subunit protein uS11 from Arthrobacter sp. (strain FB24).